The chain runs to 512 residues: MMVTLVLKYVLVIVMTLILRVLYDSICCYFLTPRRIKKFMERQGITGPKPRLLTGNIIDISKMLSHSASNDCSSIHHNIVPRLLPHYVSWSKQYGKRFIMWNGTEPRLCLTETEMIKELLTKHNPVTGKSWLQQQGTKGFIGRGLLMANGEAWHHQRHMAAPAFTRDRLKGYAKHMVECTKMMAERLRKEVGEEVEIGEEMRRLTADIISRTEFGSSCDKGKELFSLLTVLQRLCAQATRHLCFPGSRFLPSKYNREIKSLKTEVERLLMEIIDSRKDSVEIGRSSSYGDDLLGLLLNQMDSNKNNLNVQMIMDECKTFFFTGHETTSLLLTWTLMLLAHNPTWQDNVRDEVRQVCGQDGVPSVEQLSSLTSLNKVINESLRLYPPATLLPRMAFEDIKLGDLIIPKGLSIWIPVLAIHHSNELWGEDANEFNPERFTTRSFASSRHFMPFAAGPRNCIGQTFAMMEAKIILAMLVSKFSFAISENYRHAPIVVLTIKPKYGVQLVLKPLDL.

A helical transmembrane segment spans residues 2 to 22 (MVTLVLKYVLVIVMTLILRVL). A heme-binding site is contributed by cysteine 458.

Belongs to the cytochrome P450 family. Heme serves as cofactor. In terms of tissue distribution, specifically expressed in roots.

It localises to the membrane. It carries out the reaction N(6)-(dimethylallyl)adenosine 5'-phosphate + NADPH + O2 + H(+) = 9-ribosyl-trans-zeatin 5'-phosphate + NADP(+) + H2O. It catalyses the reaction N(6)-(dimethylallyl)adenosine 5'-diphosphate + NADPH + O2 + H(+) = 9-ribosyl-trans-zeatin 5'-diphosphate + NADP(+) + H2O. The catalysed reaction is N(6)-(dimethylallyl)adenosine 5'-triphosphate + NADPH + O2 + H(+) = 9-ribosyl-trans-zeatin 5'-triphosphate + NADP(+) + H2O. Functionally, cytokinin hydroxylase that catalyzes the biosynthesis of trans-zeatin via the isopentenyladenine riboside 5'-monophosphate (iPRMP)-dependent pathway. Can use isopentenyladenosine-5'-monophosphate, isopentenyladenosine-5'-diphosphate and isopentenyladenosine-5'-triphosphate as substrate. In Arabidopsis thaliana (Mouse-ear cress), this protein is Cytokinin hydroxylase (CYP735A2).